Reading from the N-terminus, the 389-residue chain is Nicotinate phosphoribosyltransferase (389 aa).

His216 is subject to Phosphohistidine; by autocatalysis.

The protein belongs to the NAPRTase family. In terms of processing, transiently phosphorylated on a His residue during the reaction cycle. Phosphorylation strongly increases the affinity for substrates and increases the rate of nicotinate D-ribonucleotide production. Dephosphorylation regenerates the low-affinity form of the enzyme, leading to product release.

It catalyses the reaction nicotinate + 5-phospho-alpha-D-ribose 1-diphosphate + ATP + H2O = nicotinate beta-D-ribonucleotide + ADP + phosphate + diphosphate. Its pathway is cofactor biosynthesis; NAD(+) biosynthesis; nicotinate D-ribonucleotide from nicotinate: step 1/1. Functionally, catalyzes the synthesis of beta-nicotinate D-ribonucleotide from nicotinate and 5-phospho-D-ribose 1-phosphate at the expense of ATP. In Ralstonia pickettii (strain 12J), this protein is Nicotinate phosphoribosyltransferase.